Consider the following 182-residue polypeptide: Large ribosomal subunit protein uL6 (182 aa).

The protein belongs to the universal ribosomal protein uL6 family. In terms of assembly, part of the 50S ribosomal subunit.

Functionally, this protein binds to the 23S rRNA, and is important in its secondary structure. It is located near the subunit interface in the base of the L7/L12 stalk, and near the tRNA binding site of the peptidyltransferase center. The chain is Large ribosomal subunit protein uL6 from Haloquadratum walsbyi (strain DSM 16790 / HBSQ001).